A 333-amino-acid chain; its full sequence is Homoserine O-succinyltransferase (333 aa).

Residue Cys-147 is the Acyl-thioester intermediate of the active site. Substrate is bound by residues Lys-168 and Ser-196. The active-site Proton acceptor is His-239. The active site involves Glu-241. Arg-253 serves as a coordination point for substrate.

This sequence belongs to the MetA family.

The protein localises to the cytoplasm. The enzyme catalyses L-homoserine + succinyl-CoA = O-succinyl-L-homoserine + CoA. The protein operates within amino-acid biosynthesis; L-methionine biosynthesis via de novo pathway; O-succinyl-L-homoserine from L-homoserine: step 1/1. Transfers a succinyl group from succinyl-CoA to L-homoserine, forming succinyl-L-homoserine. The protein is Homoserine O-succinyltransferase of Rhodopseudomonas palustris.